The chain runs to 55 residues: Large ribosomal subunit protein bL33B (55 aa).

This sequence belongs to the bacterial ribosomal protein bL33 family.

The sequence is that of Large ribosomal subunit protein bL33B from Salinispora tropica (strain ATCC BAA-916 / DSM 44818 / JCM 13857 / NBRC 105044 / CNB-440).